Here is a 65-residue protein sequence, read N- to C-terminus: Large ribosomal subunit protein bL35 (65 aa).

A disordered region spans residues 1-26 (MPKIKTVRGAAKRFKKTASGGFKRKQ). Residues 10–26 (AAKRFKKTASGGFKRKQ) show a composition bias toward basic residues.

The protein belongs to the bacterial ribosomal protein bL35 family.

The sequence is that of Large ribosomal subunit protein bL35 from Actinobacillus pleuropneumoniae serotype 7 (strain AP76).